The following is a 346-amino-acid chain: Protein RecA (346 aa).

Gly-79–Thr-86 is an ATP binding site.

This sequence belongs to the RecA family.

It is found in the cytoplasm. Its function is as follows. Can catalyze the hydrolysis of ATP in the presence of single-stranded DNA, the ATP-dependent uptake of single-stranded DNA by duplex DNA, and the ATP-dependent hybridization of homologous single-stranded DNAs. It interacts with LexA causing its activation and leading to its autocatalytic cleavage. This chain is Protein RecA, found in Chlorobaculum tepidum (strain ATCC 49652 / DSM 12025 / NBRC 103806 / TLS) (Chlorobium tepidum).